Reading from the N-terminus, the 213-residue chain is Cytochrome c biogenesis ATP-binding export protein CcmA (213 aa).

The ABC transporter domain occupies 3 to 211; that stretch reads LTAENLGVRR…QMTGFAGVET (209 aa). 35-42 lines the ATP pocket; it reads GRNGSGKS.

This sequence belongs to the ABC transporter superfamily. CcmA exporter (TC 3.A.1.107) family. As to quaternary structure, the complex is composed of two ATP-binding proteins (CcmA) and two transmembrane proteins (CcmB).

It is found in the cell inner membrane. The enzyme catalyses heme b(in) + ATP + H2O = heme b(out) + ADP + phosphate + H(+). Functionally, part of the ABC transporter complex CcmAB involved in the biogenesis of c-type cytochromes; once thought to export heme, this seems not to be the case, but its exact role is uncertain. Responsible for energy coupling to the transport system. This Agrobacterium fabrum (strain C58 / ATCC 33970) (Agrobacterium tumefaciens (strain C58)) protein is Cytochrome c biogenesis ATP-binding export protein CcmA.